The sequence spans 1423 residues: DNA-directed RNA polymerase subunit beta' (1423 aa).

Positions 70, 72, 85, and 88 each coordinate Zn(2+). Mg(2+)-binding residues include aspartate 461, aspartate 463, and aspartate 465. 4 residues coordinate Zn(2+): cysteine 809, cysteine 883, cysteine 890, and cysteine 893. The disordered stretch occupies residues 1383–1423; that stretch reads EEHAAELRQPVQADTGDDPLGAVVGESHGTDADAGDYLTEE.

It belongs to the RNA polymerase beta' chain family. In terms of assembly, the RNAP catalytic core consists of 2 alpha, 1 beta, 1 beta' and 1 omega subunit. When a sigma factor is associated with the core the holoenzyme is formed, which can initiate transcription. Mg(2+) serves as cofactor. Requires Zn(2+) as cofactor.

It carries out the reaction RNA(n) + a ribonucleoside 5'-triphosphate = RNA(n+1) + diphosphate. Functionally, DNA-dependent RNA polymerase catalyzes the transcription of DNA into RNA using the four ribonucleoside triphosphates as substrates. This is DNA-directed RNA polymerase subunit beta' from Rhizorhabdus wittichii (strain DSM 6014 / CCUG 31198 / JCM 15750 / NBRC 105917 / EY 4224 / RW1) (Sphingomonas wittichii).